The following is a 350-amino-acid chain: UDP-glucose 4-epimerase (350 aa).

NAD(+)-binding positions include 13–15, 34–38, 67–68, F89, and K93; these read GYI, DNLCN, and DI. A substrate-binding site is contributed by 133–135; sequence SAT. Residue Y158 is the Proton acceptor of the active site. NAD(+) is bound by residues K162 and Y186. Residues 186-188, 207-209, 225-227, R240, and 303-306 contribute to the substrate site; these read YFN, NNL, SVY, and RSGD.

Belongs to the NAD(P)-dependent epimerase/dehydratase family. In terms of assembly, homodimer. Requires NAD(+) as cofactor.

The catalysed reaction is UDP-alpha-D-glucose = UDP-alpha-D-galactose. It catalyses the reaction UDP-N-acetyl-alpha-D-glucosamine = UDP-N-acetyl-alpha-D-galactosamine. Its pathway is carbohydrate metabolism; galactose metabolism. Functionally, catalyzes two distinct but analogous reactions: the reversible epimerization of UDP-glucose to UDP-galactose and the reversible epimerization of UDP-N-acetylglucosamine to UDP-N-acetylgalactosamine. The reaction with UDP-Gal plays a critical role in the Leloir pathway of galactose catabolism in which galactose is converted to the glycolytic intermediate glucose 6-phosphate. It contributes to the catabolism of dietary galactose and enables the endogenous biosynthesis of both UDP-Gal and UDP-GalNAc when exogenous sources are limited. Both UDP-sugar interconversions are important in the synthesis of glycoproteins and glycolipids. In Drosophila melanogaster (Fruit fly), this protein is UDP-glucose 4-epimerase (Gale).